Reading from the N-terminus, the 103-residue chain is UPF0145 protein HH_1800 (103 aa).

The protein belongs to the UPF0145 family.

This chain is UPF0145 protein HH_1800, found in Helicobacter hepaticus (strain ATCC 51449 / 3B1).